Consider the following 358-residue polypeptide: uncharacterized protein (358 aa).

The segment at 324–358 is disordered; the sequence is DMEVEETPPTTNKDLPRGATQPKRNSIKRVSKLID. Over residues 348 to 358 the composition is skewed to basic residues; it reads NSIKRVSKLID.

This is an uncharacterized protein from Mycoplasma pneumoniae (strain ATCC 29342 / M129 / Subtype 1) (Mycoplasmoides pneumoniae).